Here is a 366-residue protein sequence, read N- to C-terminus: Phospho-N-acetylmuramoyl-pentapeptide-transferase (366 aa).

The next 10 membrane-spanning stretches (helical) occupy residues 27–47 (GAAITSLVLCWLLGRPMISLL), 76–96 (PTMGGLLILLAVSLSCLIWVI), 101–121 (FFWLSLLSMLFMGGIGFWDDF), 136–156 (IKLLAQAIVGVVVGIVLLADP), 176–196 (IDIGWMAIPFFILVVMGSSNA), 205–225 (GLAAGCTIGVAFVYAVFSYIS), 241–261 (GAGELTIFCSALIGACMGFLW), 264–284 (CYPAAVFMGDTGSLAIGSALG), 285–305 (VVAIILGQELLLVIAGGIFVI), and 343–363 (AVTVRFWILSLLFGLLALSSL).

It belongs to the glycosyltransferase 4 family. MraY subfamily. Mg(2+) serves as cofactor.

It is found in the cell inner membrane. It catalyses the reaction UDP-N-acetyl-alpha-D-muramoyl-L-alanyl-gamma-D-glutamyl-meso-2,6-diaminopimeloyl-D-alanyl-D-alanine + di-trans,octa-cis-undecaprenyl phosphate = di-trans,octa-cis-undecaprenyl diphospho-N-acetyl-alpha-D-muramoyl-L-alanyl-D-glutamyl-meso-2,6-diaminopimeloyl-D-alanyl-D-alanine + UMP. It participates in cell wall biogenesis; peptidoglycan biosynthesis. Functionally, catalyzes the initial step of the lipid cycle reactions in the biosynthesis of the cell wall peptidoglycan: transfers peptidoglycan precursor phospho-MurNAc-pentapeptide from UDP-MurNAc-pentapeptide onto the lipid carrier undecaprenyl phosphate, yielding undecaprenyl-pyrophosphoryl-MurNAc-pentapeptide, known as lipid I. This Methylacidiphilum infernorum (isolate V4) (Methylokorus infernorum (strain V4)) protein is Phospho-N-acetylmuramoyl-pentapeptide-transferase.